The following is a 1248-amino-acid chain: von Willebrand factor A domain-containing protein 5B2 (1248 aa).

The region spanning 1–138 is the VIT domain; that stretch reads MPGLYCPTSW…TMTVTLCSSR (138 aa). A disordered region spans residues 184–204; it reads VGSPEEERPTWEQPTATPDVF. The VWFA domain maps to 354–527; sequence ELLFLLDGSG…KALEPALSDI (174 aa). Disordered stretches follow at residues 590-650, 672-710, 751-789, 1008-1037, and 1126-1168; these read PEEV…SSDT, SASP…QQGC, ALAG…EPGQ, SKSA…RLSL, and DSAT…SSDL. Positions 595–619 are enriched in polar residues; the sequence is SATSPGTEPTHTTEPLGTGTVSAEL. 3 stretches are compositionally biased toward low complexity: residues 684–701, 751–764, and 780–789; these read SSES…GSRP, ALAG…SGRA, and PDGLGPEPGQ. The segment covering 1127–1145 has biased composition (low complexity); the sequence is SATASCSQSPSSGSEGPGQ. Over residues 1159 to 1168 the composition is skewed to basic and acidic residues; sequence GMERQDSSDL.

In Mus musculus (Mouse), this protein is von Willebrand factor A domain-containing protein 5B2 (Vwa5b2).